Here is a 421-residue protein sequence, read N- to C-terminus: Gamma-glutamyl phosphate reductase (421 aa).

This sequence belongs to the gamma-glutamyl phosphate reductase family.

Its subcellular location is the cytoplasm. The catalysed reaction is L-glutamate 5-semialdehyde + phosphate + NADP(+) = L-glutamyl 5-phosphate + NADPH + H(+). Its pathway is amino-acid biosynthesis; L-proline biosynthesis; L-glutamate 5-semialdehyde from L-glutamate: step 2/2. Functionally, catalyzes the NADPH-dependent reduction of L-glutamate 5-phosphate into L-glutamate 5-semialdehyde and phosphate. The product spontaneously undergoes cyclization to form 1-pyrroline-5-carboxylate. The polypeptide is Gamma-glutamyl phosphate reductase (Pseudomonas aeruginosa (strain LESB58)).